A 601-amino-acid polypeptide reads, in one-letter code: NAD-dependent malic enzyme 59 kDa isoform, mitochondrial (601 aa).

A mitochondrion-targeting transit peptide spans 1–18 (MWRVARSAASTFRRTRRL). Y129 acts as the Proton donor in catalysis. Position 182 (R182) interacts with NAD(+). K200 functions as the Proton acceptor in the catalytic mechanism. 3 residues coordinate a divalent metal cation: E271, D272, and D295. NAD(+) contacts are provided by D295 and N444.

It belongs to the malic enzymes family. Heterodimer of two related subunits. Mg(2+) serves as cofactor. It depends on Mn(2+) as a cofactor.

The protein resides in the mitochondrion matrix. It catalyses the reaction (S)-malate + NAD(+) = pyruvate + CO2 + NADH. This chain is NAD-dependent malic enzyme 59 kDa isoform, mitochondrial, found in Solanum tuberosum (Potato).